The following is a 506-amino-acid chain: Epstein-Barr nuclear antigen leader protein (506 aa).

2 disordered regions span residues Met-1 to Pro-470 and Phe-485 to Asp-506. Ser-35 carries the post-translational modification Phosphoserine; by host.

This sequence belongs to the lymphocryptovirus EBNA-LP family. As to quaternary structure, homooligomer. Interacts with host SP100; this interaction is important for EBNA-LP coactivator activity. Interacts with host HAX1, ERR1 and HSPA2. Interacts with host PRKDC and AKAP8L; these interactions modulate the coactivator function of EBNA-LP. Post-translationally, phosphorylated by the cellular protein kinase cdc2.

It localises to the host nucleus. Functionally, plays an important role in the establishment of B-cell immortalization by acting as an EBNA2 coactivator. This transcriptional activation preferentially enhances the expression of the major viral protein LMP1. The interaction between EBNA-LP and host SP100 correlates with coactivation of EBNA2 and the relocalization of SP100 from PML nuclear bodies into nucleoplasm. The sequence is that of Epstein-Barr nuclear antigen leader protein (EBNA-LP) from Epstein-Barr virus (strain B95-8) (HHV-4).